Here is a 603-residue protein sequence, read N- to C-terminus: MTDVPVSHIRNFSIIAHIDHGKSTLADRLLQLTGTVDPREMKEQFLDNMELERERGITIKLQAARMTYTSRDGETYILNLIDTPGHVDFSYEVSRSLAACEGALLVVDASQGVEAQTLANVYLALEHNLEIIPVLNKIDLPGAEPDRVKAEIEEIIGLDCSQAVLASAKEGIGIEEILESIVHLVPPPRDTVDQPLRALIFDSYYDAYRGVIVYFRVMDGIVRRGDRIRLMASGKEYEIDELGVLAPNQKPVESLHAGEVGYLAAAIKAVGDARVGDTITLAHNPAKEPLPGYTEAKPMVFCGLFPTDADQFEDLREALEKLKLNDASLHYEPETSSAMGFGFRCGFLGLLHMEIIQERLEREYNLDLIITAPSVVYRVTTVKGEVLMIDNPSLLPEPQYREKIEEPYVQLEMITPETYVGTLMELAQSRRGIFKDMRYLTQGRTTLVYEMPLAEIVTDFFDEMKSRSRGYASMEYHLIGYRANDLVKLDILINNDPVDSLAAIVHRDKAYHVGRALVSKLKDLIPRHQFKIPIQAAIGSRVIASESIPALRKDVLAKCYGGDVTRKRKLLEKQKAGKKRMKAIGRVDVPQEAFMAVLRLKNE.

Residues serine 7–arginine 189 enclose the tr-type G domain. GTP-binding positions include aspartate 19–threonine 24 and asparagine 136–aspartate 139.

Belongs to the TRAFAC class translation factor GTPase superfamily. Classic translation factor GTPase family. LepA subfamily.

It localises to the cell inner membrane. The catalysed reaction is GTP + H2O = GDP + phosphate + H(+). Its function is as follows. Required for accurate and efficient protein synthesis under certain stress conditions. May act as a fidelity factor of the translation reaction, by catalyzing a one-codon backward translocation of tRNAs on improperly translocated ribosomes. Back-translocation proceeds from a post-translocation (POST) complex to a pre-translocation (PRE) complex, thus giving elongation factor G a second chance to translocate the tRNAs correctly. Binds to ribosomes in a GTP-dependent manner. This Thermosynechococcus vestitus (strain NIES-2133 / IAM M-273 / BP-1) protein is Elongation factor 4.